The following is a 208-amino-acid chain: Large ribosomal subunit protein uL3 (208 aa).

Residues 124 to 146 (HGQSRGPMAHGSRYHRRPGSMGP) form a disordered region.

The protein belongs to the universal ribosomal protein uL3 family. Part of the 50S ribosomal subunit. Forms a cluster with proteins L14 and L19.

Functionally, one of the primary rRNA binding proteins, it binds directly near the 3'-end of the 23S rRNA, where it nucleates assembly of the 50S subunit. This chain is Large ribosomal subunit protein uL3, found in Streptococcus thermophilus (strain ATCC BAA-491 / LMD-9).